We begin with the raw amino-acid sequence, 334 residues long: D-fructose 1,6-bisphosphatase class 2/sedoheptulose 1,7-bisphosphatase (334 aa).

Mn(2+)-binding residues include Asp-33, Glu-57, Asp-85, and Glu-88. Substrate contacts are provided by residues 88–90, Tyr-119, 164–166, and 186–188; these read EGT, RAR, and DGD. Glu-213 provides a ligand contact to Mn(2+).

Belongs to the FBPase class 2 family. As to quaternary structure, homotetramer. Mn(2+) serves as cofactor.

It carries out the reaction beta-D-fructose 1,6-bisphosphate + H2O = beta-D-fructose 6-phosphate + phosphate. The enzyme catalyses D-sedoheptulose 1,7-bisphosphate + H2O = D-sedoheptulose 7-phosphate + phosphate. It participates in carbohydrate biosynthesis; Calvin cycle. Functionally, catalyzes the hydrolysis of fructose 1,6-bisphosphate (Fru 1,6-P2) and sedoheptulose 1,7-bisphosphate (Sed 1,7-P2) to fructose 6-phosphate and sedoheptulose 7-phosphate, respectively. The polypeptide is D-fructose 1,6-bisphosphatase class 2/sedoheptulose 1,7-bisphosphatase (Prochlorococcus marinus (strain NATL1A)).